The primary structure comprises 989 residues: Mediator of RNA polymerase II transcription subunit 24 (989 aa).

6 consecutive short sequence motifs (LXXLL motif) follow at residues leucine 128–leucine 132, leucine 344–leucine 348, leucine 448–leucine 452, leucine 557–leucine 561, leucine 788–leucine 792, and leucine 857–leucine 861. Phosphoserine is present on residues serine 862 and serine 873.

The protein belongs to the Mediator complex subunit 24 family. In terms of assembly, component of the Mediator complex, which is composed of MED1, MED4, MED6, MED7, MED8, MED9, MED10, MED11, MED12, MED13, MED13L, MED14, MED15, MED16, MED17, MED18, MED19, MED20, MED21, MED22, MED23, MED24, MED25, MED26, MED27, MED29, MED30, MED31, CCNC, CDK8 and CDC2L6/CDK11. The MED12, MED13, CCNC and CDK8 subunits form a distinct module termed the CDK8 module. Mediator containing the CDK8 module is less active than Mediator lacking this module in supporting transcriptional activation. Individual preparations of the Mediator complex lacking one or more distinct subunits have been variously termed ARC, CRSP, DRIP, PC2, SMCC and TRAP. Interacts with AR. In terms of tissue distribution, ubiquitous. Abundant in skeletal muscle, heart and placenta.

The protein resides in the nucleus. Its function is as follows. Component of the Mediator complex, a coactivator involved in the regulated transcription of nearly all RNA polymerase II-dependent genes. Mediator functions as a bridge to convey information from gene-specific regulatory proteins to the basal RNA polymerase II transcription machinery. Mediator is recruited to promoters by direct interactions with regulatory proteins and serves as a scaffold for the assembly of a functional preinitiation complex with RNA polymerase II and the general transcription factors. The sequence is that of Mediator of RNA polymerase II transcription subunit 24 (MED24) from Homo sapiens (Human).